Here is a 261-residue protein sequence, read N- to C-terminus: Putative diacylated glycolipid transporter LprF (261 aa).

Residues 1–38 (MNGLISQACGSHRPRRPSSLGAVAILIAATLFATVVAG) form the signal peptide. A lipid anchor (N-palmitoyl cysteine) is attached at cysteine 39. Cysteine 39 is lipidated: S-diacylglycerol cysteine. The segment at 42–61 (KPTTASSPSPGSPSPEAQQI) is disordered.

Belongs to the LppX/LprAFG lipoprotein family. Monomer. Post-translationally, modified by Lgt on Cys-39 with an S-linked diacylglycerol with a mixture of C16, C18 and C19 fatty acids (palmitic, stearic and tuberculostearic acid respectively), signal peptide is removed by LspA, modified by Lnt with an amide-linked mixture of C16 and C19 fatty acids.

It is found in the cell membrane. Functionally, might be involved in transporting short diacylated glycolipids to the cell outer membrane. Binds glycolipids that contain a diacylated glycerophosphate or a diacylated phosphatidylinositol moiety with C14 and C16 chains (upon overexpression in M.smegmatis; M.smegmatis does not encode this gene). Overexpression in M.smegmatis increases the cell wall glycolipid LAM/LM ratio (lipoarabinomannan/lipomannan), suggesting perhaps this protein is involved in the preferential translocation of diacylated LAM to the outer cell membrane. Overexpressing M.smegmatis cells adhere less well to hexadecane droplets, indicating decrease in the hydrophobicity of the cell surface, and have a slightly increased resistance to the antibiotic ethambutol. In Mycobacterium bovis (strain ATCC BAA-935 / AF2122/97), this protein is Putative diacylated glycolipid transporter LprF (lprF).